The primary structure comprises 368 residues: uncharacterized protein (368 aa).

This is an uncharacterized protein from Archaeoglobus fulgidus (strain ATCC 49558 / DSM 4304 / JCM 9628 / NBRC 100126 / VC-16).